Here is a 348-residue protein sequence, read N- to C-terminus: MKKTDELRTIRIDPLITPSELAKKYAITSEIMDNVIITRQNIARIMTGEDLRLLVVIGPCSVHDPIAAVEYAHRLYELRKKYQDRLEIIMRTYFEKPRTVVGWKGLISDPDLNGSFRVNHGLAVARKLLLDINELGMPAATEFLDMVIGQFIADLISWGAIGARTTESQIHREMASALSCPVGFKNGTDGNIRIAIDAIRAAQARHLFFAPNKDGQMTINHTSGNPYGHIIMRGGRTPNYHAHDINSAIEHLREFNLLEHLMIDFSHGNCLKEHIRQKDVAKSVSKQISQGSKTIFGVMIESFLEEGFQTVKENQPLIYGKSITDACLNWKDSVLIIKQLADAVDTRF.

The protein belongs to the class-I DAHP synthase family.

The enzyme catalyses D-erythrose 4-phosphate + phosphoenolpyruvate + H2O = 7-phospho-2-dehydro-3-deoxy-D-arabino-heptonate + phosphate. It functions in the pathway metabolic intermediate biosynthesis; chorismate biosynthesis; chorismate from D-erythrose 4-phosphate and phosphoenolpyruvate: step 1/7. Functionally, stereospecific condensation of phosphoenolpyruvate (PEP) and D-erythrose-4-phosphate (E4P) giving rise to 3-deoxy-D-arabino-heptulosonate-7-phosphate (DAHP). In Buchnera aphidicola subsp. Schizaphis graminum (strain Sg), this protein is Phospho-2-dehydro-3-deoxyheptonate aldolase, Trp-sensitive (aroH).